Consider the following 315-residue polypeptide: Methionyl-tRNA formyltransferase (315 aa).

113 to 116 is a (6S)-5,6,7,8-tetrahydrofolate binding site; the sequence is SILP.

This sequence belongs to the Fmt family.

It catalyses the reaction L-methionyl-tRNA(fMet) + (6R)-10-formyltetrahydrofolate = N-formyl-L-methionyl-tRNA(fMet) + (6S)-5,6,7,8-tetrahydrofolate + H(+). Its function is as follows. Attaches a formyl group to the free amino group of methionyl-tRNA(fMet). The formyl group appears to play a dual role in the initiator identity of N-formylmethionyl-tRNA by promoting its recognition by IF2 and preventing the misappropriation of this tRNA by the elongation apparatus. The sequence is that of Methionyl-tRNA formyltransferase from Vibrio vulnificus (strain CMCP6).